The sequence spans 151 residues: Small ribosomal subunit protein uS15 (151 aa).

Belongs to the universal ribosomal protein uS15 family.

The polypeptide is Small ribosomal subunit protein uS15 (RpS13) (Anopheles gambiae (African malaria mosquito)).